We begin with the raw amino-acid sequence, 252 residues long: MSQAVSYAILVLTIIAFLLTAAALCTPAWQVVYAREIRQWVQSGLWLSCQTRPNGMYSCTYTFSHDDFNTYFSDEVSGFRTPSFYPWQRTLFHIYLISQAFAMLSLISFCVSVSHKESKMPNILRSVFLVLAAVIAFGCLIAFAVYSYMVEYRFFHVSVSGIYEKHRGYSWYIALTGAFVYLVAIILSVVHVLLQARNSNTTMSRQNINSSLQSDFFEYQYHPNRSMESFEDRFAMRTLPPVPRQEKKTTVF.

The next 4 membrane-spanning stretches (helical) occupy residues 7–29 (YAILVLTIIAFLLTAAALCTPAW), 91–111 (LFHIYLISQAFAMLSLISFCV), 127–147 (VFLVLAAVIAFGCLIAFAVYS), and 173–193 (IALTGAFVYLVAIILSVVHVL).

Belongs to the Clc family.

It localises to the membrane. The protein is Clc-like protein 2 (clc-2) of Caenorhabditis elegans.